The following is a 434-amino-acid chain: MFS-type transporter pynF (434 aa).

A compositionally biased stretch (basic and acidic residues) spans 1–13; the sequence is MSHDQRSPSEEVS. Positions 1–34 are disordered; it reads MSHDQRSPSEEVSRTALSKPASESTIVGDGHHPL. The next 12 helical transmembrane spans lie at 44–64, 84–104, 109–129, 138–158, 171–191, 203–223, 249–269, 280–302, 311–331, 334–354, 375–395, and 402–422; these read WLVV…LNAF, IAWI…VVGP, VGAT…LMLT, LILA…YPTI, IALG…TEII, TVRA…VLII, LLFS…FFYL, VTGA…VLTG, FNVI…LHKI, SGAI…LISL, LMMG…GALL, and WYGF…VTIL.

It belongs to the major facilitator superfamily. Monocarboxylate porter (TC 2.A.1.13) family.

It localises to the cell membrane. Its function is as follows. MFS-type transporter; part of the gene cluster that mediates the biosynthesis of pyranonigrins, a family of antioxidative compounds. May be involved in the secretion of pyranonigrins. The polypeptide is MFS-type transporter pynF (Aspergillus niger (strain ATCC MYA-4892 / CBS 513.88 / FGSC A1513)).